Reading from the N-terminus, the 929-residue chain is Formin-like protein 11 (929 aa).

The first 28 residues, methionine 1–glycine 28, serve as a signal peptide directing secretion. Positions glutamate 153–serine 215 are disordered. Residues lysine 171 to proline 189 show a composition bias toward polar residues. The span at arginine 191–serine 215 shows a compositional bias: basic and acidic residues. Residues phenylalanine 222 to methionine 242 form a helical membrane-spanning segment. 2 disordered regions span residues proline 372–asparagine 472 and alanine 726–threonine 749. Over residues methionine 382–methionine 447 the composition is skewed to pro residues. The FH2 domain maps to valine 468–serine 898. The segment covering lysine 738–threonine 749 has biased composition (basic and acidic residues).

Belongs to the formin-like family. Class-I subfamily.

Its subcellular location is the membrane. This chain is Formin-like protein 11 (FH11), found in Oryza sativa subsp. japonica (Rice).